Here is a 661-residue protein sequence, read N- to C-terminus: Sorting nexin-4 (661 aa).

Composition is skewed to polar residues over residues 1–10 (MSDQFTSIQW) and 26–36 (HSQVQINSSIN). Disordered stretches follow at residues 1 to 49 (MSDQ…QEQD) and 56 to 75 (TVVR…IPPR). Acidic residues predominate over residues 38 to 49 (IEEDQGQEQEQD). Positions 56 to 70 (TVVRGGNDSDSNPNE) are enriched in polar residues. A PX domain is found at 77–198 (VYIRSKVSQP…HIFLEDSVNW (122 aa)). The a 1,2-diacyl-sn-glycero-3-phospho-(1D-myo-inositol-3-phosphate) site is built by Arg-120, Ser-122, Lys-146, and Arg-165. Over residues 554 to 572 (LRSIKSQERKNEQVHKQDQ) the composition is skewed to basic and acidic residues. Residues 554–661 (LRSIKSQERK…LVDVEGLEQW (108 aa)) are disordered. A compositionally biased stretch (polar residues) spans 624–640 (ASQTESHTQSEPQNDNQ). Acidic residues predominate over residues 645–661 (DDGSDEGLVDVEGLEQW).

The protein belongs to the sorting nexin family.

The protein localises to the cytoplasm. It localises to the membrane. It is found in the vacuole membrane. Sorting nexin involved in the separation or division of vacuoles throughout the entire life cycle of the cells. Required for glucose-induced micropexophagy and ethanol-induced macropexophagy. Involved in the fusion between the pexophagosome and the vacuole. Also involved in the separation or division of vacuoles throughout the entire life cycle of the cells. The chain is Sorting nexin-4 (SNX4) from Komagataella pastoris (Yeast).